The following is a 246-amino-acid chain: 1-(5-phosphoribosyl)-5-[(5-phosphoribosylamino)methylideneamino] imidazole-4-carboxamide isomerase (246 aa).

The active-site Proton acceptor is the Asp-10. Asp-135 (proton donor) is an active-site residue.

The protein belongs to the HisA/HisF family.

The protein resides in the cytoplasm. It carries out the reaction 1-(5-phospho-beta-D-ribosyl)-5-[(5-phospho-beta-D-ribosylamino)methylideneamino]imidazole-4-carboxamide = 5-[(5-phospho-1-deoxy-D-ribulos-1-ylimino)methylamino]-1-(5-phospho-beta-D-ribosyl)imidazole-4-carboxamide. Its pathway is amino-acid biosynthesis; L-histidine biosynthesis; L-histidine from 5-phospho-alpha-D-ribose 1-diphosphate: step 4/9. In Methanococcoides burtonii (strain DSM 6242 / NBRC 107633 / OCM 468 / ACE-M), this protein is 1-(5-phosphoribosyl)-5-[(5-phosphoribosylamino)methylideneamino] imidazole-4-carboxamide isomerase.